Consider the following 141-residue polypeptide: Nucleoside diphosphate kinase (141 aa).

6 residues coordinate ATP: Lys-11, Phe-59, Arg-87, Thr-93, Arg-104, and Asn-114. The active-site Pros-phosphohistidine intermediate is the His-117.

The protein belongs to the NDK family. As to quaternary structure, homotetramer. Mg(2+) serves as cofactor.

It is found in the cytoplasm. It catalyses the reaction a 2'-deoxyribonucleoside 5'-diphosphate + ATP = a 2'-deoxyribonucleoside 5'-triphosphate + ADP. The enzyme catalyses a ribonucleoside 5'-diphosphate + ATP = a ribonucleoside 5'-triphosphate + ADP. Its function is as follows. Major role in the synthesis of nucleoside triphosphates other than ATP. The ATP gamma phosphate is transferred to the NDP beta phosphate via a ping-pong mechanism, using a phosphorylated active-site intermediate. This chain is Nucleoside diphosphate kinase, found in Histophilus somni (strain 2336) (Haemophilus somnus).